The chain runs to 708 residues: Otogelin-like protein (708 aa).

The 113-residue stretch at lysine 1–valine 113 folds into the VWFD domain. Residue asparagine 553 is glycosylated (N-linked (GlcNAc...) asparagine). Intrachain disulfides connect cysteine 616-cysteine 672, cysteine 637-cysteine 686, cysteine 648-cysteine 703, and cysteine 652-cysteine 705. The 93-residue stretch at cysteine 616 to asparagine 708 folds into the CTCK domain.

Belongs to the otogelin family.

The protein resides in the secreted. In Pongo abelii (Sumatran orangutan), this protein is Otogelin-like protein (OTOGL).